The primary structure comprises 314 residues: Annexin-like protein RJ4 (314 aa).

Annexin repeat units lie at residues 10 to 81, 82 to 153, 165 to 236, and 240 to 311; these read FCAK…RWTL, DPAD…ALVT, KLAN…TAIR, and DPKK…TLLG. Residues glycine 25, glycine 27, and glutamate 67 each coordinate Ca(2+). Ca(2+) is bound by residues isoleucine 253, arginine 255, glycine 257, aspartate 297, and threonine 298.

The protein belongs to the annexin (TC 1.A.31.1) family. As to expression, predominantly in developing fruit.

The polypeptide is Annexin-like protein RJ4 (Fragaria ananassa (Strawberry)).